The chain runs to 187 residues: dITP/XTP pyrophosphatase (187 aa).

A substrate-binding site is contributed by 7 to 12 (TGNKHK). Positions 36 and 64 each coordinate Mg(2+). The Proton acceptor role is filled by D64. Substrate contacts are provided by residues A65, 140-143 (FAFD), K163, and 168-169 (HR).

Belongs to the HAM1 NTPase family. In terms of assembly, homodimer. Mg(2+) is required as a cofactor.

The enzyme catalyses XTP + H2O = XMP + diphosphate + H(+). It carries out the reaction dITP + H2O = dIMP + diphosphate + H(+). It catalyses the reaction ITP + H2O = IMP + diphosphate + H(+). Pyrophosphatase that catalyzes the hydrolysis of nucleoside triphosphates to their monophosphate derivatives, with a high preference for the non-canonical purine nucleotides XTP (xanthosine triphosphate), dITP (deoxyinosine triphosphate) and ITP. Seems to function as a house-cleaning enzyme that removes non-canonical purine nucleotides from the nucleotide pool, thus preventing their incorporation into DNA/RNA and avoiding chromosomal lesions. The sequence is that of dITP/XTP pyrophosphatase from Methanothermobacter marburgensis (strain ATCC BAA-927 / DSM 2133 / JCM 14651 / NBRC 100331 / OCM 82 / Marburg) (Methanobacterium thermoautotrophicum).